The chain runs to 86 residues: Small ribosomal subunit protein bS20 (86 aa).

Over residues 1–27 the composition is skewed to basic residues; that stretch reads MANSKSAKKRATQAERRRQHNASRRSM. The disordered stretch occupies residues 1–28; the sequence is MANSKSAKKRATQAERRRQHNASRRSMM.

It belongs to the bacterial ribosomal protein bS20 family.

In terms of biological role, binds directly to 16S ribosomal RNA. This is Small ribosomal subunit protein bS20 from Aliivibrio fischeri (strain MJ11) (Vibrio fischeri).